The sequence spans 393 residues: Major outer membrane protein P.IA (393 aa).

The first 19 residues, Met-1–Ala-19, serve as a signal peptide directing secretion.

Belongs to the Gram-negative porin family. Homotrimer.

The protein localises to the cell outer membrane. Its function is as follows. Serves as a slightly cation selective porin. Major antigen on the gonococcal cell surface and it may have pathogenic properties in addition to its porin activity. The chain is Major outer membrane protein P.IA (porA) from Neisseria meningitidis serogroup C.